Consider the following 252-residue polypeptide: D-aminoacyl-tRNA deacylase (252 aa).

It belongs to the DtdA deacylase family. In terms of assembly, monomer. It depends on Zn(2+) as a cofactor.

It carries out the reaction a D-aminoacyl-tRNA + H2O = a tRNA + a D-alpha-amino acid + H(+). It catalyses the reaction glycyl-tRNA(Ala) + H2O = tRNA(Ala) + glycine + H(+). D-aminoacyl-tRNA deacylase with broad substrate specificity. By recycling D-aminoacyl-tRNA to D-amino acids and free tRNA molecules, this enzyme counteracts the toxicity associated with the formation of D-aminoacyl-tRNA entities in vivo. In Pyrobaculum islandicum (strain DSM 4184 / JCM 9189 / GEO3), this protein is D-aminoacyl-tRNA deacylase.